The primary structure comprises 444 residues: C4-dicarboxylate transport protein 1 (444 aa).

Transmembrane regions (helical) follow at residues 9 to 29, 42 to 62, 78 to 98, 152 to 172, 190 to 210, 221 to 241, 307 to 327, 354 to 374, and 380 to 400; these read SIFL…VGIP, FIKL…VNGI, SVIY…VVAY, ILQV…VGEQ, IMGM…AFTT, LGAL…AVLG, FSIY…TPLA, VILA…LVLV, and FMGI…TVTI.

The protein belongs to the dicarboxylate/amino acid:cation symporter (DAACS) (TC 2.A.23) family.

The protein resides in the cell inner membrane. In terms of biological role, responsible for the transport of dicarboxylates such as succinate, fumarate, and malate from the periplasm across the membrane. The polypeptide is C4-dicarboxylate transport protein 1 (Pseudomonas paraeruginosa (strain DSM 24068 / PA7) (Pseudomonas aeruginosa (strain PA7))).